The chain runs to 289 residues: Protease HtpX homolog (289 aa).

The next 2 helical transmembrane spans lie at 11 to 31 (AALF…IAAG) and 34 to 54 (STTP…YGYW). Position 138 (His-138) interacts with Zn(2+). Glu-139 is an active-site residue. Residue His-142 coordinates Zn(2+). 2 helical membrane-spanning segments follow: residues 152-172 (SVVA…LIFG) and 182-202 (LATI…QMAI). Residue Glu-207 participates in Zn(2+) binding.

It belongs to the peptidase M48B family. The cofactor is Zn(2+).

Its subcellular location is the cell membrane. The chain is Protease HtpX homolog from Paenarthrobacter aurescens (strain TC1).